We begin with the raw amino-acid sequence, 300 residues long: 33 kDa chaperonin (300 aa).

2 disulfides stabilise this stretch: C235–C237 and C269–C272.

This sequence belongs to the HSP33 family. In terms of processing, under oxidizing conditions two disulfide bonds are formed involving the reactive cysteines. Under reducing conditions zinc is bound to the reactive cysteines and the protein is inactive.

The protein localises to the cytoplasm. In terms of biological role, redox regulated molecular chaperone. Protects both thermally unfolding and oxidatively damaged proteins from irreversible aggregation. Plays an important role in the bacterial defense system toward oxidative stress. This Pseudomonas fluorescens (strain Pf0-1) protein is 33 kDa chaperonin.